The primary structure comprises 353 residues: Vomeronasal type-1 receptor 1 (353 aa).

Over 1 to 56 (MVGDTLKLLSPLMTRYFFLLFYSTDSSDLNENQHPLDFDEMAFGKVKSGISFLIQT) the chain is Extracellular. Residues 57-77 (GVGILGNSFLLCFYNLILFTG) traverse the membrane as a helical segment. The Cytoplasmic portion of the chain corresponds to 78–84 (HKLRPTD). The helical transmembrane segment at 85 to 105 (LILSHLALANSMVLFFKGIPQ) threads the bilayer. Residues 106–132 (TMAAFGLKYLLNDTGCKFVFYYHRVGT) lie on the Extracellular side of the membrane. Asn-117 carries N-linked (GlcNAc...) asparagine glycosylation. The chain crosses the membrane as a helical span at residues 133 to 153 (RVSLSTICLLNGFQAIKLNPS). Residues 154 to 169 (ICRWMEIKIRSPRFID) lie on the Cytoplasmic side of the membrane. The chain crosses the membrane as a helical span at residues 170–190 (FCCLLCWVPHVLMNASVLLLV). At 191–226 (NGPLNSKNSSAKNNYGYCSYKASKRFSSLHAVLYFS) the chain is on the extracellular side. Asn-198 carries N-linked (GlcNAc...) asparagine glycosylation. Residues 227-247 (PDFMSLGFMVWASGSMVFFLY) form a helical membrane-spanning segment. At 248–274 (RHKQQVQHNHSNRLSCRPSQETRATRT) the chain is on the cytoplasmic side. A helical membrane pass occupies residues 275 to 295 (IMVLVSSFFVFYSVHSFLTIW). The Extracellular segment spans residues 296 to 303 (TTVVANPG). A helical transmembrane segment spans residues 304–324 (QWIVNNSVLVASYFPSRSPFV). Residues 325–353 (LIMSDTRISQFCFACRTRKTLFPNLVVMP) are Cytoplasmic-facing.

The protein belongs to the G-protein coupled receptor 1 family.

The protein localises to the cell membrane. Functionally, putative pheromone receptor. This Gorilla gorilla gorilla (Western lowland gorilla) protein is Vomeronasal type-1 receptor 1 (VN1R1).